The sequence spans 643 residues: 1-deoxy-D-xylulose-5-phosphate synthase (643 aa).

Residues H72 and 113-115 (GHA) each bind thiamine diphosphate. D144 lines the Mg(2+) pocket. Residues 145–146 (GA), N174, Y287, and E370 each bind thiamine diphosphate. Mg(2+) is bound at residue N174.

This sequence belongs to the transketolase family. DXPS subfamily. In terms of assembly, homodimer. The cofactor is Mg(2+). It depends on thiamine diphosphate as a cofactor.

The enzyme catalyses D-glyceraldehyde 3-phosphate + pyruvate + H(+) = 1-deoxy-D-xylulose 5-phosphate + CO2. It functions in the pathway metabolic intermediate biosynthesis; 1-deoxy-D-xylulose 5-phosphate biosynthesis; 1-deoxy-D-xylulose 5-phosphate from D-glyceraldehyde 3-phosphate and pyruvate: step 1/1. Catalyzes the acyloin condensation reaction between C atoms 2 and 3 of pyruvate and glyceraldehyde 3-phosphate to yield 1-deoxy-D-xylulose-5-phosphate (DXP). The protein is 1-deoxy-D-xylulose-5-phosphate synthase of Parasynechococcus marenigrum (strain WH8102).